A 636-amino-acid polypeptide reads, in one-letter code: Alpha-L-iduronidase (636 aa).

Positions 1–16 are cleaved as a signal peptide; the sequence is MLSLLLVLTTLARIHA. 3 residues coordinate alpha-D-mannopyranose: Pro-39, Ile-43, and His-45. Residues His-78, Asn-169, and Glu-170 each contribute to the alpha-L-iduronate site. Glu-170 functions as the Proton donor in the catalytic mechanism. Asn-180 carries an N-linked (GlcNAc...) asparagine glycan. Position 257 (Lys-257) interacts with alpha-L-iduronate. The N-linked (GlcNAc...) asparagine glycan is linked to Asn-268. Alpha-L-iduronate is bound by residues Glu-293 and Gly-299. Glu-293 functions as the Nucleophile in the catalytic mechanism. Residue Trp-300 coordinates alpha-D-mannopyranose. Alpha-L-iduronate contacts are provided by Asp-342 and Arg-356. N-linked (GlcNAc...) asparagine glycans are attached at residues Asn-365, Asn-448, Asn-453, and Asn-483. Cys-529 and Cys-565 are disulfide-bonded. An N-linked (GlcNAc...) asparagine glycan is attached at Asn-622.

Belongs to the glycosyl hydrolase 39 family.

It is found in the lysosome. The catalysed reaction is Hydrolysis of unsulfated alpha-L-iduronosidic linkages in dermatan sulfate.. Its function is as follows. Essential lysosomal hydrolase responsible for the degradation of glycosaminoglycans (GAG) such as heparan sulfate. Required for lysosome function and autophagy. Consequently, has an essential role in the development, maintenance and function of various cells, tissues, and organs, including the muscles and the central nervous system (CNS). In Drosophila melanogaster (Fruit fly), this protein is Alpha-L-iduronidase.